The primary structure comprises 398 residues: UPF0229 protein Ccel_0490 (398 aa).

Disordered regions lie at residues Met1–His22 and Lys68–Gly104. Composition is skewed to basic and acidic residues over residues Gly11–His22 and Gly78–Gly95.

It belongs to the UPF0229 family.

This is UPF0229 protein Ccel_0490 from Ruminiclostridium cellulolyticum (strain ATCC 35319 / DSM 5812 / JCM 6584 / H10) (Clostridium cellulolyticum).